Reading from the N-terminus, the 390-residue chain is GTPase Obg (390 aa).

The Obg domain occupies 1 to 159 (MKFVDEATIK…RELRLELLLL (159 aa)). One can recognise an OBG-type G domain in the interval 160 to 333 (ADVGMLGLPN…LCDELADFMD (174 aa)). GTP-binding positions include 166–173 (GLPNAGKS), 191–195 (FTTLI), 213–216 (DIPG), 283–286 (NKTD), and 314–316 (AAV). 2 residues coordinate Mg(2+): Ser173 and Thr193.

It belongs to the TRAFAC class OBG-HflX-like GTPase superfamily. OBG GTPase family. Monomer. The cofactor is Mg(2+).

The protein resides in the cytoplasm. In terms of biological role, an essential GTPase which binds GTP, GDP and possibly (p)ppGpp with moderate affinity, with high nucleotide exchange rates and a fairly low GTP hydrolysis rate. Plays a role in control of the cell cycle, stress response, ribosome biogenesis and in those bacteria that undergo differentiation, in morphogenesis control. The chain is GTPase Obg from Aliivibrio fischeri (strain ATCC 700601 / ES114) (Vibrio fischeri).